We begin with the raw amino-acid sequence, 124 residues long: Small ribosomal subunit protein uS13 (124 aa).

The segment at 95 to 124 is disordered; it reads GLPVRGQRTKTNARTRKGPKRTVAGKKKAR.

It belongs to the universal ribosomal protein uS13 family. In terms of assembly, part of the 30S ribosomal subunit. Forms a loose heterodimer with protein S19. Forms two bridges to the 50S subunit in the 70S ribosome.

In terms of biological role, located at the top of the head of the 30S subunit, it contacts several helices of the 16S rRNA. In the 70S ribosome it contacts the 23S rRNA (bridge B1a) and protein L5 of the 50S subunit (bridge B1b), connecting the 2 subunits; these bridges are implicated in subunit movement. Contacts the tRNAs in the A and P-sites. The protein is Small ribosomal subunit protein uS13 of Leifsonia xyli subsp. xyli (strain CTCB07).